The chain runs to 370 residues: Sphingolipid delta(4)-desaturase (370 aa).

The next 3 helical transmembrane spans lie at 68-88 (VMGV…TPVF), 92-112 (FLTL…LAIH), and 128-148 (LFAV…FQPY). Residues 112–116 (HELSH) carry the Histidine box-1 motif. The Histidine box-2 signature appears at 149 to 153 (HQLHH). Helical transmembrane passes span 173–193 (FLSS…FYAL), 197–217 (FITQ…QLIF), and 220–240 (VMVT…TFLA). Residues 299–303 (HNEHH) carry the Histidine box-3 motif.

The protein belongs to the fatty acid desaturase type 1 family. DEGS subfamily.

Its subcellular location is the membrane. It carries out the reaction an N-acylsphinganine + 2 Fe(II)-[cytochrome b5] + O2 + 2 H(+) = an N-acylsphing-4-enine + 2 Fe(III)-[cytochrome b5] + 2 H2O. It functions in the pathway lipid metabolism; sphingolipid metabolism. Functionally, delta(4)-fatty-acid desaturase which introduces a double bond at the 4-position in the long-chain base (LCB) of ceramides. Required for the formation of the monounsaturated sphingoid base (E)-sphing-4-enine during glucosylceramide (GluCer) biosynthesis. The polypeptide is Sphingolipid delta(4)-desaturase (Candida albicans (strain SC5314 / ATCC MYA-2876) (Yeast)).